A 274-amino-acid chain; its full sequence is Eukaryotic translation initiation factor 3 subunit G-2 (274 aa).

An RRM domain is found at 194-272 (SAVRISNLSE…LILCVEWSKP (79 aa)).

The protein belongs to the eIF-3 subunit G family. In terms of assembly, component of the eukaryotic translation initiation factor 3 (eIF-3) complex. The eIF-3 complex interacts with pix.

It localises to the cytoplasm. Functionally, RNA-binding component of the eukaryotic translation initiation factor 3 (eIF-3) complex, which is involved in protein synthesis of a specialized repertoire of mRNAs and, together with other initiation factors, stimulates binding of mRNA and methionyl-tRNAi to the 40S ribosome. The eIF-3 complex specifically targets and initiates translation of a subset of mRNAs involved in cell proliferation. This subunit can bind 18S rRNA. In Drosophila pseudoobscura pseudoobscura (Fruit fly), this protein is Eukaryotic translation initiation factor 3 subunit G-2.